The chain runs to 184 residues: ATP synthase subunit b, chloroplastic (184 aa).

Residues 27–49 (LATNPINLSIVIGVLIFFGKGVL) traverse the membrane as a helical segment.

The protein belongs to the ATPase B chain family. F-type ATPases have 2 components, F(1) - the catalytic core - and F(0) - the membrane proton channel. F(1) has five subunits: alpha(3), beta(3), gamma(1), delta(1), epsilon(1). F(0) has four main subunits: a(1), b(1), b'(1) and c(10-14). The alpha and beta chains form an alternating ring which encloses part of the gamma chain. F(1) is attached to F(0) by a central stalk formed by the gamma and epsilon chains, while a peripheral stalk is formed by the delta, b and b' chains.

The protein localises to the plastid. Its subcellular location is the chloroplast thylakoid membrane. Its function is as follows. F(1)F(0) ATP synthase produces ATP from ADP in the presence of a proton or sodium gradient. F-type ATPases consist of two structural domains, F(1) containing the extramembraneous catalytic core and F(0) containing the membrane proton channel, linked together by a central stalk and a peripheral stalk. During catalysis, ATP synthesis in the catalytic domain of F(1) is coupled via a rotary mechanism of the central stalk subunits to proton translocation. Component of the F(0) channel, it forms part of the peripheral stalk, linking F(1) to F(0). The sequence is that of ATP synthase subunit b, chloroplastic from Lotus japonicus (Lotus corniculatus var. japonicus).